Consider the following 757-residue polypeptide: Probable ubiquitin carboxyl-terminal hydrolase MINDY-4 (757 aa).

Disordered regions lie at residues 152-173 (FVSS…GETP) and 190-334 (SLDV…LPGG). Over residues 190-201 (SLDVKRMGENSR) the composition is skewed to basic and acidic residues. Residues Ser219 and Ser223 each carry the phosphoserine modification. A compositionally biased stretch (low complexity) spans 232–242 (SSPSSSSTQPQ). A compositionally biased stretch (polar residues) spans 254–277 (CTQQDILASSNSSPSRTSLGQLSE). Position 289 is a phosphoserine (Ser289). Residues 299–310 (PPWDRARPRDPS) are compositionally biased toward basic and acidic residues. Cys456 (nucleophile) is an active-site residue. His677 acts as the Proton acceptor in catalysis.

This sequence belongs to the MINDY deubiquitinase family. FAM188 subfamily.

It carries out the reaction Thiol-dependent hydrolysis of ester, thioester, amide, peptide and isopeptide bonds formed by the C-terminal Gly of ubiquitin (a 76-residue protein attached to proteins as an intracellular targeting signal).. Its function is as follows. Probable hydrolase that can remove 'Lys-48'-linked conjugated ubiquitin from proteins. This chain is Probable ubiquitin carboxyl-terminal hydrolase MINDY-4, found in Homo sapiens (Human).